The chain runs to 98 residues: Venom toxin OcyC11 (98 aa).

A signal peptide spans 1 to 20 (MKIACTLVLFVMLRCYVNAR).

Post-translationally, contains 4 disulfide bonds. As to expression, expressed by the venom gland.

The protein localises to the secreted. The chain is Venom toxin OcyC11 from Opisthacanthus cayaporum (South American scorpion).